Reading from the N-terminus, the 363-residue chain is Probable matrix metalloproteinase 095L (363 aa).

Positions 1 to 25 (MSVDSFTSRLAVVMTAVVLVWWAQA) are cleaved as a signal peptide. The propeptide at 26–126 (LPVPSPRRGE…PRCGVPDVSK (101 aa)) is activation peptide. The short motif at 117 to 124 (PRCGVPDV) is the Cysteine switch element. Zn(2+) contacts are provided by cysteine 119 and histidine 275. The active site involves glutamate 276. Residues histidine 279 and histidine 285 each contribute to the Zn(2+) site.

Belongs to the peptidase M10A family. It depends on Zn(2+) as a cofactor.

Its subcellular location is the secreted. In terms of biological role, probable endopeptidase. The sequence is that of Probable matrix metalloproteinase 095L from Aedes vexans (Inland floodwater mosquito).